The sequence spans 443 residues: Glutamate--tRNA ligase 1 (443 aa).

The 'HIGH' region signature appears at 8-18 (PSPTGRLHVGN). The 'KMSKS' region motif lies at 239 to 243 (KLSKR). Lys-242 is a binding site for ATP.

The protein belongs to the class-I aminoacyl-tRNA synthetase family. Glutamate--tRNA ligase type 1 subfamily. In terms of assembly, monomer.

The protein localises to the cytoplasm. It catalyses the reaction tRNA(Glu) + L-glutamate + ATP = L-glutamyl-tRNA(Glu) + AMP + diphosphate. Catalyzes the attachment of glutamate to tRNA(Glu) in a two-step reaction: glutamate is first activated by ATP to form Glu-AMP and then transferred to the acceptor end of tRNA(Glu). The protein is Glutamate--tRNA ligase 1 of Rhizorhabdus wittichii (strain DSM 6014 / CCUG 31198 / JCM 15750 / NBRC 105917 / EY 4224 / RW1) (Sphingomonas wittichii).